A 2620-amino-acid chain; its full sequence is Highly reducing polyketide synthase tazB (2620 aa).

Positions 1–22 (MPFLNGNTTHHEAHSAEPDHGN) are disordered. The 416-residue stretch at 1–416 (MPFLNGNTTH…GTNAHCILDD (416 aa)) folds into the Ketosynthase family 3 (KS3) domain. The segment covering 9–22 (THHEAHSAEPDHGN) has biased composition (basic and acidic residues). Residues Cys-166, His-301, and His-340 each act as for beta-ketoacyl synthase activity in the active site. Positions 460-481 (GFNKFDEPRGSDSAGSNANGSH) are disordered. A compositionally biased stretch (low complexity) spans 470–481 (SDSAGSNANGSH). Positions 601–923 (VFTGQGAQYA…PYLATLSRKD (323 aa)) are malonyl-CoA:ACP transacylase (MAT) domain. Residues 993–1128 (HDLFGAPVPD…GEVSPDLKKS (136 aa)) are N-terminal hotdog fold. Residues 993–1313 (HDLFGAPVPD…LAGIRLSPFK (321 aa)) form a dehydratase (DH) domain region. The region spanning 993-1318 (HDLFGAPVPD…LSPFKPESSE (326 aa)) is the PKS/mFAS DH domain. The active-site Proton acceptor; for dehydratase activity is His-1025. The interval 1157–1318 (TAPVDFTPVY…LSPFKPESSE (162 aa)) is C-terminal hotdog fold. The active-site Proton donor; for dehydratase activity is the Asp-1225. Residues 1379-1680 (GLRESREMKD…VDFEASSSIY (302 aa)) form a methyltransferase (CMet) domain region. The enoyl reductase (ER) domain stretch occupies residues 1910-2227 (GIDSLTWVTD…TGKSIGKVTL (318 aa)). Residues 2251–2425 (SFILAGGLGG…HGASVNLGAV (175 aa)) are ketoreductase (KR) domain. The region spanning 2539–2620 (EAARIIHKAL…VSLSSFTKFR (82 aa)) is the Carrier domain. At Ser-2576 the chain carries O-(pantetheine 4'-phosphoryl)serine.

The protein operates within secondary metabolite biosynthesis. In terms of biological role, highly reducing polyketide synthase; part of the gene cluster that mediates the biosynthesis of azaterrilone A and other azaphilones, a class of fungal metabolites characterized by a highly oxygenated pyrano-quinone bicyclic core and exhibiting a broad range of bioactivities. The first step of the pathway begins with the non-reducing polyketide synthase tazA that assembles one acetyl-CoA starter unit, five malonyl-CoA units, and catalyzes a series of Claisen condensations, methylation, PT-mediated cyclization, and finally releases the first hexaketide precursor through the R-domain. The tazA product then undergoes reduction on its terminal ketone and the following pyran-ring formation by yet undetermined enzyme(s). Dehydration and enoyl reduction, possibly involving the trans-enoyl reductase tazE leads to the next intermediate. TazD is predicted as an acetyltransferase and might catalyze the acetylation steps leading to the synthesis of azaterrilone A. Azaterrilone A is not the final product of the taz pathway and both the highly reducing polyketide synthase tazB and the dual enzyme tazHJ catalyze late steps of the pathway, leading to the production of the 2 final stereoisomers that contain additional polyketide modification whose structures have still to be determined. The sequence is that of Highly reducing polyketide synthase tazB from Aspergillus terreus (strain NIH 2624 / FGSC A1156).